The following is a 144-amino-acid chain: UPF0292 protein MA_4098 (144 aa).

The Toprim domain occupies Gly28 to Leu109. 3 residues coordinate Mg(2+): Glu34, Asp78, and Asp80.

The protein belongs to the UPF0292 family. The cofactor is Mg(2+).

In Methanosarcina acetivorans (strain ATCC 35395 / DSM 2834 / JCM 12185 / C2A), this protein is UPF0292 protein MA_4098.